We begin with the raw amino-acid sequence, 272 residues long: Phosphatidylglycerol--prolipoprotein diacylglyceryl transferase (272 aa).

A run of 4 helical transmembrane segments spans residues 24 to 44 (WYAL…RHLV), 64 to 84 (LLVY…VVFY), 99 to 119 (LWQG…GVML), and 125 to 145 (GLPT…GLFL). Arginine 147 serves as a coordination point for a 1,2-diacyl-sn-glycero-3-phospho-(1'-sn-glycerol). The next 3 membrane-spanning stretches (helical) occupy residues 185–205 (AAAE…LGAL), 209–229 (GLVT…CEFF), and 245–265 (MGML…AFAY).

Belongs to the Lgt family.

Its subcellular location is the cell inner membrane. The enzyme catalyses L-cysteinyl-[prolipoprotein] + a 1,2-diacyl-sn-glycero-3-phospho-(1'-sn-glycerol) = an S-1,2-diacyl-sn-glyceryl-L-cysteinyl-[prolipoprotein] + sn-glycerol 1-phosphate + H(+). It participates in protein modification; lipoprotein biosynthesis (diacylglyceryl transfer). Its function is as follows. Catalyzes the transfer of the diacylglyceryl group from phosphatidylglycerol to the sulfhydryl group of the N-terminal cysteine of a prolipoprotein, the first step in the formation of mature lipoproteins. In Methylocella silvestris (strain DSM 15510 / CIP 108128 / LMG 27833 / NCIMB 13906 / BL2), this protein is Phosphatidylglycerol--prolipoprotein diacylglyceryl transferase.